Reading from the N-terminus, the 207-residue chain is Superoxide dismutase [Mn] (207 aa).

Mn(2+)-binding residues include His-28, His-76, Asp-160, and His-164.

The protein belongs to the iron/manganese superoxide dismutase family. The cofactor is Mn(2+).

Its subcellular location is the secreted. The enzyme catalyses 2 superoxide + 2 H(+) = H2O2 + O2. Its function is as follows. Destroys superoxide anion radicals which are normally produced within the cells and which are toxic to biological systems. The sequence is that of Superoxide dismutase [Mn] (sodA) from Mycolicibacterium paratuberculosis (strain ATCC BAA-968 / K-10) (Mycobacterium paratuberculosis).